The chain runs to 227 residues: Probable cell wall protein PGA42 (227 aa).

Positions 1-16 (MKFIILLFALIHITVA) are cleaved as a signal peptide. N-linked (GlcNAc...) asparagine glycosylation occurs at asparagine 192. A lipid anchor (GPI-anchor amidated serine) is attached at serine 200. A propeptide spans 201–227 (GSQIFVLCVISVVGFIFFFLFFLSLFV) (removed in mature form).

It belongs to the IHD1 family. The GPI-anchor is attached to the protein in the endoplasmic reticulum and serves to target the protein to the cell surface. There, the glucosamine-inositol phospholipid moiety is cleaved off and the GPI-modified mannoprotein is covalently attached via its lipidless GPI glycan remnant to the 1,6-beta-glucan of the outer cell wall layer.

It localises to the secreted. Its subcellular location is the cell wall. It is found in the membrane. Probable GPI-anchored cell wall protein that may be involved in cell wall organization, hyphal growth, as well as in virulence. In Candida albicans (strain SC5314 / ATCC MYA-2876) (Yeast), this protein is Probable cell wall protein PGA42 (PGA42).